The chain runs to 562 residues: Catalase T (562 aa).

Residues H64 and N137 contribute to the active site. Y351 provides a ligand contact to heme.

Belongs to the catalase family. Homotetramer. Requires heme as cofactor.

The protein resides in the cytoplasm. The enzyme catalyses 2 H2O2 = O2 + 2 H2O. Its function is as follows. Occurs in almost all aerobically respiring organisms and serves to protect cells from the toxic effects of hydrogen peroxide. The sequence is that of Catalase T (CTT1) from Saccharomyces cerevisiae (strain YJM789) (Baker's yeast).